A 1359-amino-acid chain; its full sequence is Probable protein NAP1 (1359 aa).

Residues 1267–1359 are disordered; the sequence is PSMKQNRADT…VSRSGPLSYK (93 aa). Composition is skewed to basic and acidic residues over residues 1272 to 1282 and 1300 to 1310; these read NRADTTPRSHT and EGDRRTGERQL.

The protein belongs to the HEM-1/HEM-2 family. As to quaternary structure, binds PIR.

Its function is as follows. Involved in regulation of actin and microtubule organization. Part of a WAVE complex that activates the Arp2/3 complex. This is Probable protein NAP1 (NAP1) from Oryza sativa subsp. japonica (Rice).